The chain runs to 176 residues: Zinc finger protein 428 (176 aa).

The segment at 1–152 (MTETREPTET…EEEGGTYHCT (152 aa)) is disordered. The span at 16–46 (LEEDDEDLSPEPDSEEEEEEEEEETTDDPEY) shows a compositional bias: acidic residues. Phosphothreonine is present on Thr-96. The span at 126–138 (PSRTGETRPAGRD) shows a compositional bias: basic and acidic residues. Residues 149–171 (YHCTECEDSFDNLGELHGHFMLH) form a C2H2-type zinc finger.

This chain is Zinc finger protein 428 (Znf428), found in Mus musculus (Mouse).